The primary structure comprises 440 residues: Adenylosuccinate synthetase (440 aa).

Residues 13–19 and 41–43 each bind GTP; these read GDEGKGK and GHT. The Proton acceptor role is filled by aspartate 14. Aspartate 14 and glycine 41 together coordinate Mg(2+). IMP is bound by residues 14-17, 39-42, threonine 135, arginine 149, glutamine 230, threonine 245, and arginine 313; these read DEGK and NAGH. Histidine 42 functions as the Proton donor in the catalytic mechanism. 309-315 is a binding site for substrate; it reads TVTKRKR. GTP is bound by residues arginine 315, 341–343, and 423–425; these read KLD and STG.

Belongs to the adenylosuccinate synthetase family. Homodimer. It depends on Mg(2+) as a cofactor.

The protein resides in the cytoplasm. It carries out the reaction IMP + L-aspartate + GTP = N(6)-(1,2-dicarboxyethyl)-AMP + GDP + phosphate + 2 H(+). It functions in the pathway purine metabolism; AMP biosynthesis via de novo pathway; AMP from IMP: step 1/2. Plays an important role in the de novo pathway of purine nucleotide biosynthesis. Catalyzes the first committed step in the biosynthesis of AMP from IMP. This chain is Adenylosuccinate synthetase, found in Methylobacillus flagellatus (strain ATCC 51484 / DSM 6875 / VKM B-1610 / KT).